The sequence spans 479 residues: Proline--tRNA ligase (479 aa).

The protein belongs to the class-II aminoacyl-tRNA synthetase family. ProS type 3 subfamily. As to quaternary structure, homodimer.

The protein localises to the cytoplasm. It catalyses the reaction tRNA(Pro) + L-proline + ATP = L-prolyl-tRNA(Pro) + AMP + diphosphate. Functionally, catalyzes the attachment of proline to tRNA(Pro) in a two-step reaction: proline is first activated by ATP to form Pro-AMP and then transferred to the acceptor end of tRNA(Pro). The polypeptide is Proline--tRNA ligase (Agathobacter rectalis (strain ATCC 33656 / DSM 3377 / JCM 17463 / KCTC 5835 / VPI 0990) (Eubacterium rectale)).